Here is a 391-residue protein sequence, read N- to C-terminus: GTPase Obg (391 aa).

In terms of domain architecture, Obg spans 1–159 (MKFLDQAKIF…IWVWLRLKLI (159 aa)). The OBG-type G domain occupies 160-327 (ADAGLIGLPN…VLRVMATHVD (168 aa)). GTP contacts are provided by residues 166–173 (GLPNAGKS), 191–195 (FTTLH), 212–215 (DIPG), 279–282 (SKID), and 308–310 (SAI). Residues Ser173 and Thr193 each coordinate Mg(2+). The segment at 352 to 391 (TGIDHGYNRPSAVVDWEDAPFDDDDDDDGDESGDKGQWTR) is disordered. Positions 366–382 (DWEDAPFDDDDDDDGDE) are enriched in acidic residues.

It belongs to the TRAFAC class OBG-HflX-like GTPase superfamily. OBG GTPase family. As to quaternary structure, monomer. The cofactor is Mg(2+).

The protein localises to the cytoplasm. Functionally, an essential GTPase which binds GTP, GDP and possibly (p)ppGpp with moderate affinity, with high nucleotide exchange rates and a fairly low GTP hydrolysis rate. Plays a role in control of the cell cycle, stress response, ribosome biogenesis and in those bacteria that undergo differentiation, in morphogenesis control. The sequence is that of GTPase Obg from Rhodospirillum rubrum (strain ATCC 11170 / ATH 1.1.1 / DSM 467 / LMG 4362 / NCIMB 8255 / S1).